A 257-amino-acid polypeptide reads, in one-letter code: Imidazole glycerol phosphate synthase subunit HisF (257 aa).

Residues Asp-12 and Asp-131 contribute to the active site.

It belongs to the HisA/HisF family. In terms of assembly, heterodimer of HisH and HisF.

Its subcellular location is the cytoplasm. The enzyme catalyses 5-[(5-phospho-1-deoxy-D-ribulos-1-ylimino)methylamino]-1-(5-phospho-beta-D-ribosyl)imidazole-4-carboxamide + L-glutamine = D-erythro-1-(imidazol-4-yl)glycerol 3-phosphate + 5-amino-1-(5-phospho-beta-D-ribosyl)imidazole-4-carboxamide + L-glutamate + H(+). The protein operates within amino-acid biosynthesis; L-histidine biosynthesis; L-histidine from 5-phospho-alpha-D-ribose 1-diphosphate: step 5/9. In terms of biological role, IGPS catalyzes the conversion of PRFAR and glutamine to IGP, AICAR and glutamate. The HisF subunit catalyzes the cyclization activity that produces IGP and AICAR from PRFAR using the ammonia provided by the HisH subunit. This Marinobacter nauticus (strain ATCC 700491 / DSM 11845 / VT8) (Marinobacter aquaeolei) protein is Imidazole glycerol phosphate synthase subunit HisF.